Here is a 116-residue protein sequence, read N- to C-terminus: Ribonuclease P protein component (116 aa).

It belongs to the RnpA family. Consists of a catalytic RNA component (M1 or rnpB) and a protein subunit.

The catalysed reaction is Endonucleolytic cleavage of RNA, removing 5'-extranucleotides from tRNA precursor.. Its function is as follows. RNaseP catalyzes the removal of the 5'-leader sequence from pre-tRNA to produce the mature 5'-terminus. It can also cleave other RNA substrates such as 4.5S RNA. The protein component plays an auxiliary but essential role in vivo by binding to the 5'-leader sequence and broadening the substrate specificity of the ribozyme. The sequence is that of Ribonuclease P protein component from Gluconacetobacter diazotrophicus (strain ATCC 49037 / DSM 5601 / CCUG 37298 / CIP 103539 / LMG 7603 / PAl5).